Here is a 126-residue protein sequence, read N- to C-terminus: uncharacterized protein (126 aa).

Residues 5–25 form a helical membrane-spanning segment; the sequence is LIQHITSIFVFSFFFLFFFFS.

Its subcellular location is the membrane. This is an uncharacterized protein from Saccharomyces cerevisiae (strain ATCC 204508 / S288c) (Baker's yeast).